A 457-amino-acid polypeptide reads, in one-letter code: Sensor protein CpxA (457 aa).

Over 1 to 7 (MIGSLTA) the chain is Cytoplasmic. A helical membrane pass occupies residues 8-29 (RIFAIFWLTLALVLMLVLMLPK). Topologically, residues 30 to 163 (LDSRQMTELL…SDFINLLFDR (134 aa)) are periplasmic. Residues 164–184 (PLLLLIVTMLVSTPLLLWLAW) traverse the membrane as a helical segment. Positions 185 to 237 (SLAKPARKLKNAADEVAQGNLRQHPELEAGPQEFLAAGASFNQMVTALERMMT) constitute an HAMP domain. Topologically, residues 185 to 457 (SLAKPARKLK…VIWLPLYKRS (273 aa)) are cytoplasmic. The Histidine kinase domain occupies 245–455 (DISHELRTPL…RLVIWLPLYK (211 aa)). His-248 is subject to Phosphohistidine; by autocatalysis.

It is found in the cell inner membrane. The enzyme catalyses ATP + protein L-histidine = ADP + protein N-phospho-L-histidine.. In terms of biological role, this protein is involved in several diverse cellular processes, such as the functioning of acetohydroxyacid synthetase I, in the biosynthesis of isoleucine and valine, the TraJ protein activation activity for tra gene expression in F plasmid, and the synthesis, translocation, or stability of cell envelope proteins. Activates CpxR by phosphorylation. This is Sensor protein CpxA (cpxA) from Escherichia coli O157:H7.